The primary structure comprises 513 residues: Aromatic amino acid aminotransferase 2 (513 aa).

2 positions are modified to phosphoserine: Ser-90 and Ser-92. Pyridoxal 5'-phosphate-binding positions include Tyr-102, 143–144 (SN), Asn-232, Tyr-263, and 314–316 (TFS). Asn-232 contacts substrate. Lys-317 is modified (N6-(pyridoxal phosphate)lysine). Arg-324 is a pyridoxal 5'-phosphate binding site. Residue Arg-481 coordinates substrate.

Belongs to the class-I pyridoxal-phosphate-dependent aminotransferase family. Pyridoxal 5'-phosphate is required as a cofactor.

The protein localises to the cytoplasm. It carries out the reaction an aromatic L-alpha-amino acid + 2-oxoglutarate = an aromatic oxo-acid + L-glutamate. The catalysed reaction is an aromatic L-alpha-amino acid + 4-methylsulfanyl-2-oxobutanoate = an aromatic oxo-acid + L-methionine. It catalyses the reaction L-kynurenine + 2-oxoglutarate = kynurenate + L-glutamate + H2O. The protein operates within amino-acid biosynthesis; L-methionine biosynthesis via salvage pathway; L-methionine from S-methyl-5-thio-alpha-D-ribose 1-phosphate: step 6/6. It participates in amino-acid degradation; L-kynurenine degradation; kynurenate from L-kynurenine: step 1/2. Functionally, general aromatic amino acid transaminase involved in several otherwise unrelated metabolic pathways. Mainly involved in tryptophan degradation. Active with phenylalanine, tyrosine and tryptophan as amino donors and with phenylpyruvate, hydroxyphenylpyruvate and pyruvate as amino acceptors. Does not accept glutamate or 2-oxoglutarate as substrates. Also active with methionine, leucine, glutamine and kynurenine. Catalyzes the formation of methionine from 2-keto-4-methylthiobutyrate (KMTB) in the methionine salvage pathway primarily using aromatic amino acids (tyrosine, phenylalanine and tryptophan) as the amino donors. Catalyzes the irreversible transamination of the L-tryptophan metabolite L-kynurenine to form kynurenic acid (KA) with pyruvate as amino acceptor. This chain is Aromatic amino acid aminotransferase 2, found in Saccharomyces cerevisiae (strain ATCC 204508 / S288c) (Baker's yeast).